A 324-amino-acid polypeptide reads, in one-letter code: Concanavalin B (324 aa).

The signal sequence occupies residues M1–A25. A GH18 domain is found at T30 to T311. An N-linked (GlcNAc...) asparagine glycan is attached at N309.

This sequence belongs to the glycosyl hydrolase 18 family.

May act as a carbohydrate-binding protein. The sequence is that of Concanavalin B from Canavalia ensiformis (Jack bean).